The sequence spans 91 residues: Probable Fe(2+)-trafficking protein (91 aa).

The protein belongs to the Fe(2+)-trafficking protein family. Monomer.

Its function is as follows. Could be a mediator in iron transactions between iron acquisition and iron-requiring processes, such as synthesis and/or repair of Fe-S clusters in biosynthetic enzymes. This is Probable Fe(2+)-trafficking protein from Escherichia coli O7:K1 (strain IAI39 / ExPEC).